We begin with the raw amino-acid sequence, 407 residues long: uncharacterized protein (407 aa).

The next 11 helical transmembrane spans lie at 13 to 30 (IVFT…SPFL), 40 to 62 (VTPL…YYVL), 67 to 89 (ILGM…YNII), 118 to 140 (LAFA…VFSG), 147 to 169 (VYER…IRRL), 179 to 199 (AVGL…YYNY), 253 to 271 (WISG…SVFV), 281 to 303 (TEII…FGPL), 334 to 356 (GYLI…EIIA), 361 to 378 (AFAF…LVSF), and 385 to 402 (QFLV…IVLF).

Its subcellular location is the cell membrane. This is an uncharacterized protein from Aquifex aeolicus (strain VF5).